The sequence spans 521 residues: Fucosyltransferase 3 (521 aa).

The span at 1–12 shows a compositional bias: basic and acidic residues; the sequence is MKRGKKNSDAGD. The disordered stretch occupies residues 1 to 29; that stretch reads MKRGKKNSDAGDRLTNSDTRTGSSELNAM. At 1 to 39 the chain is on the cytoplasmic side; that stretch reads MKRGKKNSDAGDRLTNSDTRTGSSELNAMMKPSLSSMKT. Residues 14–26 are compositionally biased toward polar residues; sequence LTNSDTRTGSSEL. Residues 40 to 60 form a helical; Signal-anchor for type II membrane protein membrane-spanning segment; it reads MGLLLAVLMVASVMFSLSVVL. Over 61-521 the chain is Lumenal; that stretch reads RDPPSDDVIE…QATLFHGCKD (461 aa). Residues Asn-152, Asn-222, and Asn-493 are each glycosylated (N-linked (GlcNAc...) asparagine).

Belongs to the glycosyltransferase 37 family. As to expression, expressed in roots, stems, leaves, flowers, siliques and seedlings.

It localises to the golgi apparatus. The protein localises to the golgi stack membrane. It participates in protein modification; protein glycosylation. In terms of biological role, may be involved in cell wall biosynthesis. May act as a fucosyltransferase. This chain is Fucosyltransferase 3 (FUT3), found in Arabidopsis thaliana (Mouse-ear cress).